We begin with the raw amino-acid sequence, 172 residues long: Large ribosomal subunit protein uL10 (172 aa).

The protein belongs to the universal ribosomal protein uL10 family. Part of the ribosomal stalk of the 50S ribosomal subunit. The N-terminus interacts with L11 and the large rRNA to form the base of the stalk. The C-terminus forms an elongated spine to which L12 dimers bind in a sequential fashion forming a multimeric L10(L12)X complex.

Functionally, forms part of the ribosomal stalk, playing a central role in the interaction of the ribosome with GTP-bound translation factors. The polypeptide is Large ribosomal subunit protein uL10 (Clostridium tetani (strain Massachusetts / E88)).